Reading from the N-terminus, the 901-residue chain is Aconitate hydratase A (901 aa).

[4Fe-4S] cluster-binding residues include C443, C509, and C512.

This sequence belongs to the aconitase/IPM isomerase family. As to quaternary structure, monomer. The cofactor is [4Fe-4S] cluster.

The catalysed reaction is citrate = D-threo-isocitrate. The enzyme catalyses (2S,3R)-3-hydroxybutane-1,2,3-tricarboxylate = 2-methyl-cis-aconitate + H2O. Its pathway is carbohydrate metabolism; tricarboxylic acid cycle; isocitrate from oxaloacetate: step 2/2. The protein operates within organic acid metabolism; propanoate degradation. Functionally, involved in the catabolism of short chain fatty acids (SCFA) via the tricarboxylic acid (TCA)(acetyl degradation route) and probably the 2-methylcitrate cycle I (propionate degradation route). Catalyzes the reversible isomerization of citrate to isocitrate via cis-aconitate. Could catalyze the hydration of 2-methyl-cis-aconitate to yield (2R,3S)-2-methylisocitrate. The apo form of AcnA functions as a RNA-binding regulatory protein. This is Aconitate hydratase A (acnA) from Staphylococcus epidermidis (strain ATCC 12228 / FDA PCI 1200).